A 971-amino-acid chain; its full sequence is Exportin-2 (971 aa).

The residue at position 1 (methionine 1) is an N-acetylmethionine. In terms of domain architecture, Importin N-terminal spans 29 to 102 (AEKFLESVEG…KANIVHLMLS (74 aa)). Serine 112 bears the Phosphoserine mark. Residues lysine 574 and lysine 824 each carry the N6-acetyllysine modification. Serine 931 is modified (phosphoserine).

Belongs to the XPO2/CSE1 family. In terms of assembly, found in a complex with CSE1L/XPO2, Ran and KPNA2. Binds with high affinity to importin-alpha only in the presence of RanGTP. The complex is dissociated by the combined action of RanBP1 and RanGAP1. Interacts with CFTR.

It localises to the cytoplasm. It is found in the nucleus. In terms of biological role, export receptor for importin-alpha. Mediates importin-alpha re-export from the nucleus to the cytoplasm after import substrates (cargos) have been released into the nucleoplasm. In the nucleus binds cooperatively to importin-alpha and to the GTPase Ran in its active GTP-bound form. Docking of this trimeric complex to the nuclear pore complex (NPC) is mediated through binding to nucleoporins. Upon transit of a nuclear export complex into the cytoplasm, disassembling of the complex and hydrolysis of Ran-GTP to Ran-GDP (induced by RANBP1 and RANGAP1, respectively) cause release of the importin-alpha from the export receptor. CSE1L/XPO2 then return to the nuclear compartment and mediate another round of transport. The directionality of nuclear export is thought to be conferred by an asymmetric distribution of the GTP- and GDP-bound forms of Ran between the cytoplasm and nucleus. This Bos taurus (Bovine) protein is Exportin-2 (CSE1L).